Here is a 523-residue protein sequence, read N- to C-terminus: Synaptotagmin-10 (523 aa).

At 1-55 (MSFRKEDGVSSLCQKALHIITELCFAGQVEWDKCSGIFPADRSGQGGGGTDISVS) the chain is on the vesicular side. Residues 13 to 35 (CQKALHIITELCFAGQVEWDKCS) form a cysteine motif region. A helical membrane pass occupies residues 56-76 (LLAVVVSFCGLALLVVSLFVF). Residues 77–523 (WKLCWPCWKS…CSSPRPPSTP (447 aa)) lie on the Cytoplasmic side of the membrane. Residue Thr-136 is modified to Phosphothreonine. C2 domains are found at residues 231–352 (TCGK…TVWK) and 363–496 (DLGE…THWH). Ca(2+)-binding residues include Asp-262, Asp-268, Asp-320, Phe-321, Asp-322, Ser-325, Asp-328, Asp-394, Asp-400, Asp-454, and Asp-456.

This sequence belongs to the synaptotagmin family. Homodimer; disulfide-linked via the cysteine motif. Can also form heterodimers with SYT3, SYT6, SYT7 and SYT9. Requires Ca(2+) as cofactor. In terms of tissue distribution, highly expressed in the olfactory bulb.

It localises to the cytoplasmic vesicle. The protein resides in the secretory vesicle membrane. Its function is as follows. Ca(2+) sensor specifically required for the Ca(2+)-dependent exocytosis of secretory vesicles containing IGF1 in neurons of the olfactory bulb. Exocytosis of IGF1 is required for sensory perception of smell. Not involved in Ca(2+)-dependent synaptic vesicle exocytosis. Acts through Ca(2+) and phospholipid binding to the C2 domain: Ca(2+) induces binding of the C2-domains to phospholipid membranes and to assembled SNARE-complexes; both actions contribute to triggering exocytosis. The polypeptide is Synaptotagmin-10 (Mus musculus (Mouse)).